A 103-amino-acid chain; its full sequence is Large ribosomal subunit protein bL21 (103 aa).

This sequence belongs to the bacterial ribosomal protein bL21 family. In terms of assembly, part of the 50S ribosomal subunit. Contacts protein L20.

This protein binds to 23S rRNA in the presence of protein L20. The sequence is that of Large ribosomal subunit protein bL21 from Shewanella amazonensis (strain ATCC BAA-1098 / SB2B).